The following is a 235-amino-acid chain: Phosphoribosylaminoimidazole-succinocarboxamide synthase (235 aa).

The protein belongs to the SAICAR synthetase family.

It carries out the reaction 5-amino-1-(5-phospho-D-ribosyl)imidazole-4-carboxylate + L-aspartate + ATP = (2S)-2-[5-amino-1-(5-phospho-beta-D-ribosyl)imidazole-4-carboxamido]succinate + ADP + phosphate + 2 H(+). Its pathway is purine metabolism; IMP biosynthesis via de novo pathway; 5-amino-1-(5-phospho-D-ribosyl)imidazole-4-carboxamide from 5-amino-1-(5-phospho-D-ribosyl)imidazole-4-carboxylate: step 1/2. The protein is Phosphoribosylaminoimidazole-succinocarboxamide synthase of Streptococcus pneumoniae (strain 70585).